The primary structure comprises 557 residues: Probable tRNA-splicing endonuclease subunit tsp-5 (557 aa).

5 disordered regions span residues 1–36 (MPLD…MMDE), 131–152 (KLTK…DRKL), 225–252 (SVPA…EDDD), 370–403 (PSST…SDSP), and 514–557 (SGGP…GRGN). The span at 131 to 140 (KLTKRGKEGA) shows a compositional bias: basic and acidic residues. A compositionally biased stretch (low complexity) spans 370–381 (PSSTSSSASPTA). Gly residues-rich tracts occupy residues 517-527 (PRRGGGGGGKK) and 538-549 (GRGGGRGGGRGG).

It belongs to the SEN54 family. TRNA splicing endonuclease is a heterotetramer composed of tsp-2/sen2, tsp-1/sen15, tsp-4/sen34 and tsp-5/sen54. Interacts directly with tsp-2/sen2.

Functionally, non-catalytic subunit of the tRNA-splicing endonuclease complex, a complex responsible for identification and cleavage of the splice sites in pre-tRNA. It cleaves pre-tRNA at the 5' and 3' splice sites to release the intron. The products are an intron and two tRNA half-molecules bearing 2',3' cyclic phosphate and 5'-OH termini. There are no conserved sequences at the splice sites, but the intron is invariably located at the same site in the gene, placing the splice sites an invariant distance from the constant structural features of the tRNA body. May be required to embody the molecular ruler of the complex. In Neurospora crassa (strain ATCC 24698 / 74-OR23-1A / CBS 708.71 / DSM 1257 / FGSC 987), this protein is Probable tRNA-splicing endonuclease subunit tsp-5 (tsp-5).